The primary structure comprises 301 residues: MFFRNLTLFRFPTTLDFSQIDTLLPPVQLKPVGPLEMSSRGFISPFGRDEQGVLSHRLEDFLWLTVGGEDKILPGAVVNDLLERKVAEIEEKEGRRPGGKARKRLKDDLIHELLPRAFVKSSRTDAILDLQHGYIAVNSSSRKSGENVMSEIRGALGSFPALPLNAEVAPRAILTGWIAGEPLPEGLSLGEECEMKDPIEGGAVVKCQHQELRGDEIDKHLEAGKQVTKLALVLDDNLSFVLGDDLVIRKLKFLDGALDQLEHSEDDGARAELDARFTLMSAEIRRLFLLLETALKLSKAE.

It belongs to the RdgC family.

Its subcellular location is the cytoplasm. It is found in the nucleoid. In terms of biological role, may be involved in recombination. This Xanthomonas oryzae pv. oryzae (strain MAFF 311018) protein is Recombination-associated protein RdgC.